We begin with the raw amino-acid sequence, 127 residues long: Fluoride-specific ion channel FluC (127 aa).

4 helical membrane-spanning segments follow: residues 4 to 24 (LLLA…LLSM), 35 to 55 (LGTL…FAWF), 71 to 91 (TGFC…VFLL), and 103 to 123 (VFVN…LFSA). Positions 75 and 78 each coordinate Na(+).

It belongs to the fluoride channel Fluc/FEX (TC 1.A.43) family.

Its subcellular location is the cell inner membrane. The catalysed reaction is fluoride(in) = fluoride(out). Its activity is regulated as follows. Na(+) is not transported, but it plays an essential structural role and its presence is essential for fluoride channel function. Its function is as follows. Fluoride-specific ion channel. Important for reducing fluoride concentration in the cell, thus reducing its toxicity. This is Fluoride-specific ion channel FluC from Escherichia coli O7:K1 (strain IAI39 / ExPEC).